A 64-amino-acid polypeptide reads, in one-letter code: Large ribosomal subunit protein bL35 (64 aa).

This sequence belongs to the bacterial ribosomal protein bL35 family.

The chain is Large ribosomal subunit protein bL35 from Pseudomonas putida (strain W619).